The sequence spans 393 residues: Phosphoglycerate kinase (393 aa).

Residues 22–24 (DFN), Arg-37, 60–63 (HLGR), Arg-119, and Arg-152 each bind substrate. ATP is bound by residues Lys-202, Gly-293, Glu-324, and 350 to 353 (GGDS).

The protein belongs to the phosphoglycerate kinase family. In terms of assembly, monomer.

The protein localises to the cytoplasm. It carries out the reaction (2R)-3-phosphoglycerate + ATP = (2R)-3-phospho-glyceroyl phosphate + ADP. It functions in the pathway carbohydrate degradation; glycolysis; pyruvate from D-glyceraldehyde 3-phosphate: step 2/5. The sequence is that of Phosphoglycerate kinase from Borrelia garinii subsp. bavariensis (strain ATCC BAA-2496 / DSM 23469 / PBi) (Borreliella bavariensis).